The following is a 282-amino-acid chain: Nucleotide-binding protein ABO_0549 (282 aa).

An ATP-binding site is contributed by 8–15; the sequence is GRSGSGKT. 59–62 provides a ligand contact to GTP; sequence DARN.

It belongs to the RapZ-like family.

Displays ATPase and GTPase activities. The chain is Nucleotide-binding protein ABO_0549 from Alcanivorax borkumensis (strain ATCC 700651 / DSM 11573 / NCIMB 13689 / SK2).